Consider the following 267-residue polypeptide: MRILVEIAYQGNNFLGFQIQQNGRTVQQQFEKLLQRMHKRHVRIHPSSRTDRGVHAIQQYFHFDTELNIPMSQWQYAMNRTLPDDIYVNNVVTVDDDFHCRYDCVGKRYRYKVYQAQHRDPFQSGLKTFIPETLDLDKMNRAAQQFIGTHDFTGFCSQKTEVESKVRTLYQSEIVKTDDGFDYIVTGSGFLYNMVRVLVAFLIEVGKGRHEISDVPKLLESKNRKNVPFTAPAEGLYLEKIYLDENELLKDFGNDIKIHRKKSLQND.

Asp-51 functions as the Nucleophile in the catalytic mechanism. Tyr-109 provides a ligand contact to substrate.

Belongs to the tRNA pseudouridine synthase TruA family. As to quaternary structure, homodimer.

It carries out the reaction uridine(38/39/40) in tRNA = pseudouridine(38/39/40) in tRNA. In terms of biological role, formation of pseudouridine at positions 38, 39 and 40 in the anticodon stem and loop of transfer RNAs. This Staphylococcus aureus (strain Mu3 / ATCC 700698) protein is tRNA pseudouridine synthase A.